The following is a 405-amino-acid chain: Mitochondrial outer membrane protein SLC25A46 (405 aa).

The segment at 1–77 (MTSRRPDSFE…PDEAQSAAPP (77 aa)) is disordered. The span at 22-37 (FSGGYSGRSFNNSSSS) shows a compositional bias: low complexity. Residues 80-171 (QLNRFAGFGI…GIISECTPLP (92 aa)) form a Solcar 1 repeat. 6 consecutive transmembrane segments (helical) span residues 87 to 107 (FGIGLASLFTENVLAHPCIVF), 151 to 171 (FVVQGVTLGTEGIISECTPLP), 183 to 203 (VVGHLVLKGLTYVVAMPFYSA), 242 to 262 (LLPLWNLVLPTVLHGILHYII), 302 to 322 (FPELMASFAASLCADVLLFPL), and 371 to 391 (MGFYKGFGSIVVQYSLHATVL). Residues 299–401 (DAYFPELMAS…QITKMIYSTL (103 aa)) form a Solcar 2 repeat.

This sequence belongs to the mitochondrial carrier (TC 2.A.29) family.

The protein resides in the mitochondrion outer membrane. In terms of biological role, transmembrane protein of the mitochondrial outer membrane that controls mitochondrial organization. May regulate the biogenesis and dynamics of mitochondrial cristae, the inwards folds of the inner mitochondrial membrane. Could regulate mitochondrial lipid homeostasis and thereby mitochondrial fission. The protein is Mitochondrial outer membrane protein SLC25A46 (slc25a46) of Danio rerio (Zebrafish).